Reading from the N-terminus, the 99-residue chain is NADH-quinone oxidoreductase subunit K (99 aa).

Helical transmembrane passes span 3–23, 28–48, and 59–79; these read PDNYLYLSALLFTIGAAGVLL, IVMFMCIELMLNAANLAFVTF, and VVAFFTMVVAACEVVIGLAII.

It belongs to the complex I subunit 4L family. As to quaternary structure, NDH-1 is composed of 14 different subunits. Subunits NuoA, H, J, K, L, M, N constitute the membrane sector of the complex.

The protein localises to the cell membrane. It carries out the reaction a quinone + NADH + 5 H(+)(in) = a quinol + NAD(+) + 4 H(+)(out). NDH-1 shuttles electrons from NADH, via FMN and iron-sulfur (Fe-S) centers, to quinones in the respiratory chain. The immediate electron acceptor for the enzyme in this species is believed to be a menaquinone. Couples the redox reaction to proton translocation (for every two electrons transferred, four hydrogen ions are translocated across the cytoplasmic membrane), and thus conserves the redox energy in a proton gradient. This Mycolicibacterium vanbaalenii (strain DSM 7251 / JCM 13017 / BCRC 16820 / KCTC 9966 / NRRL B-24157 / PYR-1) (Mycobacterium vanbaalenii) protein is NADH-quinone oxidoreductase subunit K.